Reading from the N-terminus, the 241-residue chain is 2-C-methyl-D-erythritol 4-phosphate cytidylyltransferase (241 aa).

This sequence belongs to the IspD/TarI cytidylyltransferase family. IspD subfamily. Homodimer.

The enzyme catalyses 2-C-methyl-D-erythritol 4-phosphate + CTP + H(+) = 4-CDP-2-C-methyl-D-erythritol + diphosphate. Its pathway is isoprenoid biosynthesis; isopentenyl diphosphate biosynthesis via DXP pathway; isopentenyl diphosphate from 1-deoxy-D-xylulose 5-phosphate: step 2/6. Functionally, catalyzes the formation of 4-diphosphocytidyl-2-C-methyl-D-erythritol from CTP and 2-C-methyl-D-erythritol 4-phosphate (MEP). In Yersinia pestis, this protein is 2-C-methyl-D-erythritol 4-phosphate cytidylyltransferase.